The chain runs to 422 residues: MTNLLEDLSFRGLIQQMTDEEGLNKQLNEEKIRLYSGFDPTADSLHIGHLLPILTLRRFQLAGHHPIALVGGATGLIGDPSGKKAERTLNTADIVSEWSQKIKNQLSRFLDFEAAENPAVIANNFDWIGKMNVIDFLRDVGKNFGINYMLAKDTVSSRIESGISYTEFSYMILQSYDFLNLYRDKNCKLQIGGSDQWGNITAGLELIRKSEEEGAKAFGLTIPLVTKADGTKFGKTEGGAIWLDKEKTSPYEFYQFWINTDDRDVVKYLKYFTFLSKEEIEAYAEKTETAPEKREAQKRLAEEVTSLVHGREALEQAINISQALFSGNIKELSAQDVKVGFKDVPSMEVDSTQELSLVDVLVQSKLSPSKRQAREDIQNGAVYINGERQTEINYTLSGEDRIENQFTVLRRGKKKYFLVTYK.

Residue Y35 coordinates L-tyrosine. The 'HIGH' region motif lies at 40 to 49 (PTADSLHIGH). Residues Y170 and Q174 each coordinate L-tyrosine. The 'KMSKS' region signature appears at 232–236 (KFGKT). K235 contributes to the ATP binding site. The 67-residue stretch at 355-421 (LSLVDVLVQS…GKKKYFLVTY (67 aa)) folds into the S4 RNA-binding domain.

This sequence belongs to the class-I aminoacyl-tRNA synthetase family. TyrS type 1 subfamily. As to quaternary structure, homodimer.

It is found in the cytoplasm. The catalysed reaction is tRNA(Tyr) + L-tyrosine + ATP = L-tyrosyl-tRNA(Tyr) + AMP + diphosphate + H(+). Catalyzes the attachment of tyrosine to tRNA(Tyr) in a two-step reaction: tyrosine is first activated by ATP to form Tyr-AMP and then transferred to the acceptor end of tRNA(Tyr). In Bacillus subtilis (strain 168), this protein is Tyrosine--tRNA ligase 1.